The chain runs to 386 residues: MRKRAEPVPPEHESFGRAPLDRECSIKQKLRIPGTKGHYPHDSDCDSKGMKRFGRRYGLWSRLRMFLIFLLGLYIAIPFLVKICPAIQTQLVFLNLVRFPYFIDLKRPEDQGLNHTCNFYLQPEEDVSIGVWHTVPAVLWKDAQGKDLEWYEEVLSTSYPVILYLHGNAGTRGGDHRVQLYKVLSSMGYHVISFDYRGWGDSVGSPSESGMTYDALHVFDWIKARSGDNPVYIWGHSLGTGVATNLVRRLCERETPPDSLILESPFTNIREEAKSHPFSVIYRYFPGFDWFFLDPITASGIKFANDDNVKYISCPLLILHAEDDPVIPFHLGKKLYNIAAPARSLRDYKVQFVPFHKDLGYRHKYIYRSPELRQILRDFLGNTEQQ.

At 1 to 66 (MRKRAEPVPP…YGLWSRLRMF (66 aa)) the chain is on the cytoplasmic side. Residues 67–87 (LIFLLGLYIAIPFLVKICPAI) form a helical membrane-spanning segment. Residues 88–386 (QTQLVFLNLV…RDFLGNTEQQ (299 aa)) lie on the Extracellular side of the membrane. Asn-114 is a glycosylation site (N-linked (GlcNAc...) asparagine). The active-site Nucleophile is the Ser-237. Residues Asp-324 and His-363 each act as charge relay system in the active site.

Belongs to the serine esterase family.

It is found in the endoplasmic reticulum membrane. The catalysed reaction is 1-(9Z-octadecenoyl)-sn-glycero-3-phospho-L-serine + H2O = sn-glycero-3-phospho-L-serine + (9Z)-octadecenoate + H(+). It carries out the reaction 1-(9Z-octadecenoyl)-sn-glycero-3-phospho-(1'-sn-glycerol) + H2O = sn-glycero-3-phospho-(1'-sn-glycerol) + (9Z)-octadecenoate + H(+). It catalyses the reaction 1-(9Z-octadecenoyl)-sn-glycero-3-phospho-(1D-myo-inositol) + H2O = sn-glycero-3-phospho-1D-myo-inositol + (9Z)-octadecenoate + H(+). The enzyme catalyses 1-(9Z-octadecenoyl)-sn-glycero-3-phosphoethanolamine + H2O = sn-glycero-3-phosphoethanolamine + (9Z)-octadecenoate + H(+). The catalysed reaction is 1-(9Z-octadecenoyl)-sn-glycero-3-phosphocholine + H2O = 1-(9Z-octadecenoyl)-sn-glycerol + phosphocholine + H(+). It carries out the reaction 2-(9Z-octadecenoyl)-glycerol + H2O = glycerol + (9Z)-octadecenoate + H(+). It catalyses the reaction 1-hexadecanoyl-sn-glycero-3-phospho-L-serine + H2O = sn-glycero-3-phospho-L-serine + hexadecanoate + H(+). The enzyme catalyses 2-(5Z,8Z,11Z,14Z-eicosatetraenoyl)-glycerol + H2O = glycerol + (5Z,8Z,11Z,14Z)-eicosatetraenoate + H(+). The catalysed reaction is Hydrolyzes glycerol monoesters of long-chain fatty acids.. It carries out the reaction 1-decanoylglycerol + H2O = decanoate + glycerol + H(+). It catalyses the reaction 1-dodecanoylglycerol + H2O = dodecanoate + glycerol + H(+). The enzyme catalyses 1-tetradecanoylglycerol + H2O = tetradecanoate + glycerol + H(+). The catalysed reaction is 2-hexadecanoylglycerol + H2O = glycerol + hexadecanoate + H(+). It carries out the reaction 1-(9Z-octadecenoyl)-glycerol + H2O = glycerol + (9Z)-octadecenoate + H(+). It catalyses the reaction 2-(9Z,12Z-octadecadienoyl)-glycerol + H2O = (9Z,12Z)-octadecadienoate + glycerol + H(+). The enzyme catalyses 1-(5Z,8Z,11Z,14Z-eicosatetraenoyl)-glycerol + H2O = glycerol + (5Z,8Z,11Z,14Z)-eicosatetraenoate + H(+). The catalysed reaction is 1-(9Z,12Z-octadecadienoyl)-glycerol + H2O = (9Z,12Z)-octadecadienoate + glycerol + H(+). It carries out the reaction 1-hexadecanoylglycerol + H2O = glycerol + hexadecanoate + H(+). It catalyses the reaction 1-octadecanoylglycerol + H2O = octadecanoate + glycerol + H(+). The enzyme catalyses 1-octadecanoyl-2-(9,10-epoxyoctadecanoyl)-sn-glycero-3-phospho-L-serine + H2O = 9,10-epoxyoctadecanoate + 1-octadecanoyl-sn-glycero-3-phosphoserine + H(+). The catalysed reaction is 1-octadecanoyl-2-(10-hydroxyoctadecanoyl)-sn-glycero-3-phospho-L-serine + H2O = 1-octadecanoyl-sn-glycero-3-phosphoserine + 10-hydroxyoctadecanoate + H(+). It carries out the reaction 1-hexadecanoyl-2-(10-hydroxyoctadecanoyl)-sn-glycero-3-phospho-L-serine + H2O = 10-hydroxyoctadecanoate + 1-hexadecanoyl-sn-glycero-3-phospho-L-serine + H(+). Functionally, lysophosphatidylserine (LPS) lipase that mediates the hydrolysis of lysophosphatidylserine, a class of signaling lipids that regulates immunological and neurological processes. Represents a major lysophosphatidylserine lipase in the brain, thereby playing a key role in the central nervous system. Also able to hydrolyze oxidized phosphatidylserine; oxidized phosphatidylserine is produced in response to severe inflammatory stress and constitutes a proapoptotic 'eat me' signal. Also has monoacylglycerol (MAG) lipase activity: hydrolyzes 2-arachidonoylglycerol (2-AG), thereby acting as a regulator of endocannabinoid signaling pathways. Has a strong preference for very-long-chain lipid substrates; substrate specificity is likely due to improved catalysis and not improved substrate binding. The protein is Lysophosphatidylserine lipase ABHD12 of Xenopus tropicalis (Western clawed frog).